Consider the following 153-residue polypeptide: SsrA-binding protein (153 aa).

The protein belongs to the SmpB family.

Its subcellular location is the cytoplasm. Required for rescue of stalled ribosomes mediated by trans-translation. Binds to transfer-messenger RNA (tmRNA), required for stable association of tmRNA with ribosomes. tmRNA and SmpB together mimic tRNA shape, replacing the anticodon stem-loop with SmpB. tmRNA is encoded by the ssrA gene; the 2 termini fold to resemble tRNA(Ala) and it encodes a 'tag peptide', a short internal open reading frame. During trans-translation Ala-aminoacylated tmRNA acts like a tRNA, entering the A-site of stalled ribosomes, displacing the stalled mRNA. The ribosome then switches to translate the ORF on the tmRNA; the nascent peptide is terminated with the 'tag peptide' encoded by the tmRNA and targeted for degradation. The ribosome is freed to recommence translation, which seems to be the essential function of trans-translation. The sequence is that of SsrA-binding protein from Macrococcus caseolyticus (strain JCSC5402) (Macrococcoides caseolyticum).